Here is a 236-residue protein sequence, read N- to C-terminus: 3-deoxy-D-manno-octulosonic acid kinase (236 aa).

Asp-166 is an active-site residue.

This sequence belongs to the protein kinase superfamily. KdkA/RfaP family.

Its subcellular location is the cell inner membrane. It carries out the reaction an alpha-Kdo-(2-&gt;6)-lipid IVA + ATP = a 4-O-phospho-alpha-Kdo-(2-&gt;6)-lipid IVA + ADP + H(+). It functions in the pathway bacterial outer membrane biogenesis; LPS core biosynthesis. Its function is as follows. Catalyzes the ATP-dependent phosphorylation of the 3-deoxy-D-manno-octulosonic acid (Kdo) residue in Kdo-lipid IV(A) at the 4-OH position. The protein is 3-deoxy-D-manno-octulosonic acid kinase of Photobacterium profundum (strain SS9).